Here is a 263-residue protein sequence, read N- to C-terminus: 3-methyl-2-oxobutanoate hydroxymethyltransferase (263 aa).

Residues Asp-44 and Asp-83 each coordinate Mg(2+). 3-methyl-2-oxobutanoate is bound by residues 44–45 (DS), Asp-83, and Lys-113. Residue Glu-115 participates in Mg(2+) binding. Glu-183 functions as the Proton acceptor in the catalytic mechanism.

It belongs to the PanB family. Homodecamer; pentamer of dimers. Mg(2+) serves as cofactor.

The protein localises to the cytoplasm. It carries out the reaction 3-methyl-2-oxobutanoate + (6R)-5,10-methylene-5,6,7,8-tetrahydrofolate + H2O = 2-dehydropantoate + (6S)-5,6,7,8-tetrahydrofolate. It participates in cofactor biosynthesis; (R)-pantothenate biosynthesis; (R)-pantoate from 3-methyl-2-oxobutanoate: step 1/2. Catalyzes the reversible reaction in which hydroxymethyl group from 5,10-methylenetetrahydrofolate is transferred onto alpha-ketoisovalerate to form ketopantoate. In Trichodesmium erythraeum (strain IMS101), this protein is 3-methyl-2-oxobutanoate hydroxymethyltransferase.